The chain runs to 116 residues: Putative pterin-4-alpha-carbinolamine dehydratase (116 aa).

Belongs to the pterin-4-alpha-carbinolamine dehydratase family.

The enzyme catalyses (4aS,6R)-4a-hydroxy-L-erythro-5,6,7,8-tetrahydrobiopterin = (6R)-L-erythro-6,7-dihydrobiopterin + H2O. This Xylella fastidiosa (strain M23) protein is Putative pterin-4-alpha-carbinolamine dehydratase.